Here is a 692-residue protein sequence, read N- to C-terminus: Ribosome-releasing factor 2, mitochondrial (692 aa).

Residues 1-29 constitute a mitochondrion transit peptide; sequence MLKYAWQSGPKQRNRWLWHLSNQIWKRSY. The region spanning 31-310 is the tr-type G domain; the sequence is SKIRNIGILA…AVNAYLPAPE (280 aa). Residues 40-47, 104-108, and 158-161 contribute to the GTP site; these read AHIDAGKT, DTPGH, and NKMD.

It belongs to the TRAFAC class translation factor GTPase superfamily. Classic translation factor GTPase family. EF-G/EF-2 subfamily.

Its subcellular location is the mitochondrion. Its function is as follows. Mitochondrial GTPase that mediates the disassembly of ribosomes from messenger RNA at the termination of mitochondrial protein biosynthesis. Not involved in the GTP-dependent ribosomal translocation step during translation elongation. This is Ribosome-releasing factor 2, mitochondrial from Drosophila sechellia (Fruit fly).